Consider the following 294-residue polypeptide: Probable 2-(5''-triphosphoribosyl)-3'-dephosphocoenzyme-A synthase (294 aa).

The protein belongs to the CitG/MdcB family.

The catalysed reaction is 3'-dephospho-CoA + ATP = 2'-(5''-triphospho-alpha-D-ribosyl)-3'-dephospho-CoA + adenine. The polypeptide is Probable 2-(5''-triphosphoribosyl)-3'-dephosphocoenzyme-A synthase (Streptococcus pyogenes serotype M2 (strain MGAS10270)).